The following is a 362-amino-acid chain: Epoxyqueuosine reductase (362 aa).

D143 functions as the Proton donor in the catalytic mechanism. The 30-residue stretch at 191–220 (PDSPKHQDSCGKCQACIKLCPTGAIQPGKM) folds into the 4Fe-4S ferredoxin-type domain. The [4Fe-4S] cluster site is built by C200, C203, C206, C210, C226, C253, C256, and C260.

Belongs to the QueG family. In terms of assembly, monomer. The cofactor is cob(II)alamin. Requires [4Fe-4S] cluster as cofactor.

It is found in the cytoplasm. It catalyses the reaction epoxyqueuosine(34) in tRNA + AH2 = queuosine(34) in tRNA + A + H2O. It participates in tRNA modification; tRNA-queuosine biosynthesis. Catalyzes the conversion of epoxyqueuosine (oQ) to queuosine (Q), which is a hypermodified base found in the wobble positions of tRNA(Asp), tRNA(Asn), tRNA(His) and tRNA(Tyr). This is Epoxyqueuosine reductase from Francisella cf. novicida (strain Fx1).